A 232-amino-acid chain; its full sequence is Probable proteasome subunit alpha type-5 (232 aa).

This sequence belongs to the peptidase T1A family. The 26S proteasome consists of a 20S proteasome core and two 19S regulatory subunits. The 20S proteasome core is composed of 28 subunits that are arranged in four stacked rings, resulting in a barrel-shaped structure. The two end rings are each formed by seven alpha subunits, and the two central rings are each formed by seven beta subunits. The catalytic chamber with the active sites is on the inside of the barrel.

It localises to the cytoplasm. Its subcellular location is the nucleus. In terms of biological role, the proteasome degrades poly-ubiquitinated proteins in the cytoplasm and in the nucleus. It is essential for the regulated turnover of proteins and for the removal of misfolded proteins. The proteasome is a multicatalytic proteinase complex that is characterized by its ability to cleave peptides with Arg, Phe, Tyr, Leu, and Glu adjacent to the leaving group at neutral or slightly basic pH. It has an ATP-dependent proteolytic activity. The sequence is that of Probable proteasome subunit alpha type-5 (PUP2) from Encephalitozoon cuniculi (strain GB-M1) (Microsporidian parasite).